The primary structure comprises 459 residues: Probable D-serine dehydratase (459 aa).

Residue Lys-119 is modified to N6-(pyridoxal phosphate)lysine.

It belongs to the serine/threonine dehydratase family. DsdA subfamily. The cofactor is pyridoxal 5'-phosphate.

The enzyme catalyses D-serine = pyruvate + NH4(+). The protein is Probable D-serine dehydratase of Geobacillus stearothermophilus (Bacillus stearothermophilus).